The primary structure comprises 206 residues: Small ribosomal subunit protein uS4A (206 aa).

Positions 98–164 (MRLDNVVYKL…EKFKTFAENP (67 aa)) constitute an S4 RNA-binding domain.

Belongs to the universal ribosomal protein uS4 family. In terms of assembly, part of the 30S ribosomal subunit. Contacts protein S5. The interaction surface between S4 and S5 is involved in control of translational fidelity.

One of the primary rRNA binding proteins, it binds directly to 16S rRNA where it nucleates assembly of the body of the 30S subunit. Functionally, with S5 and S12 plays an important role in translational accuracy. This chain is Small ribosomal subunit protein uS4A, found in Clostridium novyi (strain NT).